Consider the following 793-residue polypeptide: MKFSEAWLRTWVDPDISRETLVERLTLAGLEVESTEPVAAPFKGVKAARIVAVEPHPSAPRLQVCQVDIGSGSLLTVVCGAPNARAGLWAPLAIIGAQLPAGIRIELAKLQGVESFGMLCSAAELGLAEQSAGLLELPEGDFPGVDLHEFLQFDDISIEVDLTPNRSDCLSVAGIAREVGVLTQSPVTEPAIEPVTAQIGDIFPVTVTAPAACPRYLGRVLRGVNPQTQTPWWLRERLRRSGIRSLGLVVDVTNYVMLELGQPMHAFDLERLKGGIQVRYGQADEALTLLDGTHLRLDEETLIIADQQRALALAGIMGGEESGINNQTRHLFLESAFFNPSVIAGRARFYGLHTDSSHRFERGVDPELPRRAMERATALLLEIAGGQAGPVIEVADSSQLPPQATIILRKARIHRVLGVEIAESRITEQLTRLGLKVERIEEGWEVKVPSFRFDLALEVDLIEELGRLYGYDRLPSTRPVGQIQPVLKTEAGAFIDRIRQVLVDRDYQEAITYSFVDQELQQLLDPEGSPLVLNNPISTDMAVMRTTLWTGLVQALQYNSYRQQERIRFFEYGLTFNGQLADLKQERTIAGLISGASYPEQWGLVGRPADFFDLKGDVEAILSLVGEQRNCFEFMAASHPALHPGQSAQILREGQAVGWLGALHPWLESKLDLSSRAYLFSLQLEAVERGSLPVFQSLSKFPAIRRDIAFLVNANIPVQVVFDCLKGCESDILKEFQLFDVYTGKGIDPDKKSLALKLILQHPSYTLTDDRVNIFIERVMALLVTELGAIIRE.

Residues 39–148 (AAPFKGVKAA…EGDFPGVDLH (110 aa)) form the tRNA-binding domain. The B5 domain occupies 401–476 (PPQATIILRK…RLYGYDRLPS (76 aa)). Residues Asp-454, Asp-460, Glu-463, and Glu-464 each contribute to the Mg(2+) site. Positions 699–792 (SKFPAIRRDI…LVTELGAIIR (94 aa)) constitute an FDX-ACB domain.

This sequence belongs to the phenylalanyl-tRNA synthetase beta subunit family. Type 1 subfamily. In terms of assembly, tetramer of two alpha and two beta subunits. It depends on Mg(2+) as a cofactor.

The protein resides in the cytoplasm. It catalyses the reaction tRNA(Phe) + L-phenylalanine + ATP = L-phenylalanyl-tRNA(Phe) + AMP + diphosphate + H(+). This chain is Phenylalanine--tRNA ligase beta subunit, found in Nitrosococcus oceani (strain ATCC 19707 / BCRC 17464 / JCM 30415 / NCIMB 11848 / C-107).